A 151-amino-acid polypeptide reads, in one-letter code: Large ribosomal subunit protein uL15 (151 aa).

The segment at 1-62 is disordered; that stretch reads MVKLNELFPK…GGQMPLYRRV (62 aa). The segment covering 11–20 has biased composition (basic residues); sequence HGSRKAKRRI.

This sequence belongs to the universal ribosomal protein uL15 family. As to quaternary structure, part of the 50S ribosomal subunit.

In terms of biological role, binds to the 23S rRNA. The sequence is that of Large ribosomal subunit protein uL15 from Elusimicrobium minutum (strain Pei191).